A 291-amino-acid chain; its full sequence is Beta-lactamase CTX-M-14 (291 aa).

Positions 1–28 (MVTKRVQRMMFAAAACIPLLLGSAPLYA) are cleaved as a signal peptide. Catalysis depends on S73, which acts as the Nucleophile; acyl-ester intermediate. 4 residues coordinate a beta-lactam: K76, S133, E169, and S240.

This sequence belongs to the class-A beta-lactamase family. In terms of assembly, monomer.

The protein resides in the secreted. The enzyme catalyses a beta-lactam + H2O = a substituted beta-amino acid. Inhibited by the beta-lactamase-blocking agents clavulanic acid, tazobactam and sulbactam. In terms of biological role, extended-spectrum beta-lactamase (ESBL) which confers resistance to penicillins, as well as first, second, and third-generation cephalosporins. Has cefotaxime-hydrolyzing activity. The sequence is that of Beta-lactamase CTX-M-14 from Escherichia coli.